Here is a 90-residue protein sequence, read N- to C-terminus: Probable Fe(2+)-trafficking protein (90 aa).

This sequence belongs to the Fe(2+)-trafficking protein family.

In terms of biological role, could be a mediator in iron transactions between iron acquisition and iron-requiring processes, such as synthesis and/or repair of Fe-S clusters in biosynthetic enzymes. The polypeptide is Probable Fe(2+)-trafficking protein (Pseudomonas putida (strain ATCC 700007 / DSM 6899 / JCM 31910 / BCRC 17059 / LMG 24140 / F1)).